Consider the following 98-residue polypeptide: UPF0358 protein LCA_1078 (98 aa).

This sequence belongs to the UPF0358 family.

The polypeptide is UPF0358 protein LCA_1078 (Latilactobacillus sakei subsp. sakei (strain 23K) (Lactobacillus sakei subsp. sakei)).